The following is a 2234-amino-acid chain: RNA-directed RNA polymerase L (2234 aa).

The segment at 26-283 is endonuclease; it reads ITVVTSQTEM…INLSDEKLSC (258 aa). Glutamate 51, aspartate 89, and glutamate 102 together coordinate Mn(2+). Lysine 115 is an active-site residue. Over residues 879 to 891 the composition is skewed to basic and acidic residues; it reads KRDDHMKDSEDSK. Disordered stretches follow at residues 879 to 898 and 927 to 949; these read KRDD…SSDL and KLKE…QQKR. The span at 935 to 945 shows a compositional bias: polar residues; it reads RQSSSGSSLKN. A RdRp catalytic domain is found at 1184–1383; it reads MEMKMSVNLG…FISSKFNKFV (200 aa). Aspartate 1342 contacts Mg(2+).

The protein belongs to the Bunyavirales RNA polymerase family. In terms of assembly, homomultimer; the oligomeric structure is essential for the polymerase activity. Interacts with nucleoprotein N. Interacts with protein Z; this interaction inhibits viral transcription and replication, Z partially blocks the product exit tunnel for the releasing nascent RNA product. Mn(2+) serves as cofactor. The cofactor is Mg(2+).

It localises to the virion. Its subcellular location is the host cytoplasm. The catalysed reaction is RNA(n) + a ribonucleoside 5'-triphosphate = RNA(n+1) + diphosphate. Its function is as follows. RNA-dependent RNA polymerase, which is responsible for the replication and transcription of the viral RNA genome using antigenomic RNA as an intermediate. During transcription, synthesizes subgenomic RNAs and assures their capping by a cap-snatching mechanism, which involves the endonuclease activity cleaving the host capped pre-mRNAs. These short capped RNAs are then used as primers for viral transcription. The 3'-end of subgenomic mRNAs molecules are heterogeneous and not polyadenylated. The replicase function is to direct synthesis of antigenomic and genomic RNA which are encapsidated and non capped. As a consequence of the use of the same enzyme for both transcription and replication, these mechanisms need to be well coordinated. These processes may be regulated by proteins N and Z in a dose-dependent manner. Z protein inhibits the viral polymerase L und thus the viral transcription and RNA synthesis. The chain is RNA-directed RNA polymerase L from Bolomys (OLVV).